A 76-amino-acid polypeptide reads, in one-letter code: Small ribosomal subunit protein bS18 (76 aa).

Belongs to the bacterial ribosomal protein bS18 family. In terms of assembly, part of the 30S ribosomal subunit. Forms a tight heterodimer with protein bS6.

Its function is as follows. Binds as a heterodimer with protein bS6 to the central domain of the 16S rRNA, where it helps stabilize the platform of the 30S subunit. The sequence is that of Small ribosomal subunit protein bS18 from Mesoplasma florum (strain ATCC 33453 / NBRC 100688 / NCTC 11704 / L1) (Acholeplasma florum).